The chain runs to 135 residues: Small ribosomal subunit protein uS12 (135 aa).

The residue at position 89 (D89) is a 3-methylthioaspartic acid. The disordered stretch occupies residues 108–135 (NKRTVSRSKYGTKKAKATDKKATDSKKK). Over residues 111–122 (TVSRSKYGTKKA) the composition is skewed to basic residues. Positions 123–135 (KATDKKATDSKKK) are enriched in basic and acidic residues.

The protein belongs to the universal ribosomal protein uS12 family. In terms of assembly, part of the 30S ribosomal subunit. Contacts proteins S8 and S17. May interact with IF1 in the 30S initiation complex.

Its function is as follows. With S4 and S5 plays an important role in translational accuracy. Functionally, interacts with and stabilizes bases of the 16S rRNA that are involved in tRNA selection in the A site and with the mRNA backbone. Located at the interface of the 30S and 50S subunits, it traverses the body of the 30S subunit contacting proteins on the other side and probably holding the rRNA structure together. The combined cluster of proteins S8, S12 and S17 appears to hold together the shoulder and platform of the 30S subunit. The sequence is that of Small ribosomal subunit protein uS12 from Helicobacter pylori (strain HPAG1).